Here is a 309-residue protein sequence, read N- to C-terminus: tRNA dimethylallyltransferase (309 aa).

11-18 (GPTASGKS) contributes to the ATP binding site. Substrate is bound at residue 13-18 (TASGKS). 2 interaction with substrate tRNA regions span residues 36 to 39 (DSMQ) and 160 to 164 (QRLIR).

This sequence belongs to the IPP transferase family. As to quaternary structure, monomer. Mg(2+) serves as cofactor.

It catalyses the reaction adenosine(37) in tRNA + dimethylallyl diphosphate = N(6)-dimethylallyladenosine(37) in tRNA + diphosphate. In terms of biological role, catalyzes the transfer of a dimethylallyl group onto the adenine at position 37 in tRNAs that read codons beginning with uridine, leading to the formation of N6-(dimethylallyl)adenosine (i(6)A). The chain is tRNA dimethylallyltransferase from Rickettsia felis (strain ATCC VR-1525 / URRWXCal2) (Rickettsia azadi).